The sequence spans 188 residues: Peroxidase B (188 aa).

This sequence belongs to the peroxidase family. Partially N-glycosylated.

The protein resides in the secreted. The catalysed reaction is 2 a phenolic donor + H2O2 = 2 a phenolic radical donor + 2 H2O. The sequence is that of Peroxidase B from Aloe vera (Aloe).